The primary structure comprises 311 residues: tRNA dimethylallyltransferase (311 aa).

8–15 (GPTGVGKS) contacts ATP. 10 to 15 (TGVGKS) serves as a coordination point for substrate.

Belongs to the IPP transferase family. In terms of assembly, monomer. It depends on Mg(2+) as a cofactor.

It carries out the reaction adenosine(37) in tRNA + dimethylallyl diphosphate = N(6)-dimethylallyladenosine(37) in tRNA + diphosphate. Functionally, catalyzes the transfer of a dimethylallyl group onto the adenine at position 37 in tRNAs that read codons beginning with uridine, leading to the formation of N6-(dimethylallyl)adenosine (i(6)A). The protein is tRNA dimethylallyltransferase of Mycobacterium leprae (strain Br4923).